The following is a 119-amino-acid chain: Large ribosomal subunit protein eL31z (119 aa).

It belongs to the eukaryotic ribosomal protein eL31 family.

The chain is Large ribosomal subunit protein eL31z (RPL31A) from Arabidopsis thaliana (Mouse-ear cress).